A 342-amino-acid chain; its full sequence is Trans-3-hydroxy-L-proline dehydratase (342 aa).

S90 acts as the Proton acceptor in catalysis. Residues 91 to 92, D252, and 257 to 258 each bind substrate; these read GS and GT.

The protein belongs to the proline racemase family.

It catalyses the reaction trans-3-hydroxy-L-proline = 1-pyrroline-2-carboxylate + H2O. Catalyzes the dehydration of trans-3-hydroxy-L-proline (t3LHyp) to Delta(1)-pyrroline-2-carboxylate (Pyr2C). Can also catalyze the epimerization of trans-4-hydroxy-L-proline (t4LHyp) to cis-4-hydroxy-D-proline (c4DHyp), albeit with 150-fold lower efficiency. May be involved in the degradation pathway that converts t3LHyp to L-proline, which would allow R.meliloti to grow on t3LHyp as a sole carbon source. Displays no proline racemase activity. This Rhizobium meliloti (strain 1021) (Ensifer meliloti) protein is Trans-3-hydroxy-L-proline dehydratase.